We begin with the raw amino-acid sequence, 772 residues long: Delta-like protein A (772 aa).

The signal sequence occupies residues 1–20 (MGRHLLLLLFSILYMLLCQA). Residues 21–536 (SSSGVFELKL…SQIASDVPWT (516 aa)) are Extracellular-facing. Residues 179–223 (FVCDEHYYGEGCSVFCRPRDDAFGHFTCGERGEIICDAGWKGQYC) enclose the DSL domain. 26 disulfides stabilise this stretch: Cys-181–Cys-190, Cys-194–Cys-206, Cys-214–Cys-223, Cys-228–Cys-239, Cys-232–Cys-245, Cys-259–Cys-270, Cys-265–Cys-276, Cys-278–Cys-287, Cys-294–Cys-306, Cys-300–Cys-316, Cys-318–Cys-327, Cys-334–Cys-345, Cys-339–Cys-354, Cys-356–Cys-365, Cys-372–Cys-383, Cys-377–Cys-393, Cys-395–Cys-404, Cys-411–Cys-422, Cys-416–Cys-431, Cys-433–Cys-442, Cys-449–Cys-460, Cys-454–Cys-469, Cys-471–Cys-480, Cys-487–Cys-498, Cys-492–Cys-507, and Cys-509–Cys-518. EGF-like domains follow at residues 225-257 (EPICLPGCDEEHGFCEKPGECKCRVGFKGRYCD), 257-288 (DECIRYPGCLHGTCQQPWQCNCQEGWGGLFCN), and 290-328 (DLNYCTHHKPCLNGATCSNTGQGSYTCSCRPGFSGASCE). Residues 330-366 (EVNECTGNPCRNGGSCTDMENTYSCTCPPGFYGKNCE) form the EGF-like 4; calcium-binding domain. 4 consecutive EGF-like domains span residues 368-405 (SAMTCADGPCFNGGRCADNPDGGYFCQCPTGYAGFNCE), 407-443 (KIDHCSSSPCSNGARCVDLVNSYLCQCPDGFTGMNCD), 445-481 (AGDECSMYPCQNGGTCQEGASGYMCTCPPGYTGRNCS), and 483-519 (PVSRCQHNPCHNGATCHERNNRYVCACVSGYGGRNCQ). N-linked (GlcNAc...) asparagine glycosylation is present at Asn-479. A helical membrane pass occupies residues 537–557 (AVGSGVLLVLLLVVACAVVVV). Residues 558-772 (CVRSKVQQRR…KDECVIATEV (215 aa)) lie on the Cytoplasmic side of the membrane. The segment at 688 to 722 (EEKRRKRLKSDASEKSKYSESRYSESKYSESKYSE) is disordered. The span at 696-722 (KSDASEKSKYSESRYSESKYSESKYSE) shows a compositional bias: basic and acidic residues.

In terms of assembly, interacts with mib. Post-translationally, ubiquitinated by mib, leading to its endocytosis and subsequent degradation. Ubiquitinated by the ECS(ASB11) complex, leading to its degradation by the proteasome. As to expression, expressed in nervous system. In the developing nervous system, it is expressed in overlapping regions with deltaB (dlb) and deltaD (dld); in the neural plate, dla is expressed in patches of contiguous cells with dld, while dlb is confined to scattered cells within those patches that will differentiate as neurons. In 24 hours embryos, expressed in the hindbrain in stripes adjacent to rhombomere boundaries, but not in the actual boundary cells. During gastrulation and tail formation, expressed in embryonic midline cells. Expressed in hair cells of inner ear.

Its subcellular location is the membrane. Its function is as follows. Acts as a ligand for Notch receptors and is involved in primary neurogenesis. Can activate Notch receptors, thereby playing a key role in lateral inhibition, a process that prevents the immediate neighbors of each nascent neural cell from simultaneously embarking on neural differentiation. Required for boundary formation during segmentation of the hindbrain. Required for midline cell fate specification prior to germ layer formation; regulates specification of floorplate, notochord and hypochord. In inner ear, it prevents adjacent cells from adopting the same cell fate. Plays a role in angiogenesis. The protein is Delta-like protein A (dla) of Danio rerio (Zebrafish).